We begin with the raw amino-acid sequence, 707 residues long: Kinesin-like protein KIN-13B (707 aa).

Positions 152 to 477 (KIKVVVRKRP…LRYADRVKSL (326 aa)) constitute a Kinesin motor domain. 243–250 (GQTGSGKT) serves as a coordination point for ATP. Positions 619–656 (EHLNELLQEEEDLVSAHRKQVEETLDMIKEEMNLLVEA) form a coiled coil.

The protein belongs to the TRAFAC class myosin-kinesin ATPase superfamily. Kinesin family. KIN-13 subfamily.

The polypeptide is Kinesin-like protein KIN-13B (Oryza sativa subsp. japonica (Rice)).